The sequence spans 63 residues: Large ribosomal subunit protein bL32 (63 aa).

Belongs to the bacterial ribosomal protein bL32 family.

This is Large ribosomal subunit protein bL32 (rpmF) from Aquifex aeolicus (strain VF5).